A 987-amino-acid polypeptide reads, in one-letter code: Collagen alpha-1(I) chain (987 aa).

The segment covering 1-21 (SVPGPMGPSGPRGLPGPPGPG) has biased composition (pro residues). A disordered region spans residues 1–987 (SVPGPMGPSG…PGPPGPPGPP (987 aa)). 4-hydroxyproline is present on residues Pro15, Pro18, Pro20, Pro29, Pro32, Pro35, Pro50, Pro65, Pro71, Pro80, and Pro86. The span at 23–41 (QGFQGPPGEPGEPGSSGPM) shows a compositional bias: low complexity. The segment covering 53-67 (NGDDGEAGKPGRPGE) has biased composition (basic and acidic residues). Lys89 carries the post-translational modification 5-hydroxylysine; alternate. Lys89 carries O-linked (Gal...) hydroxylysine; alternate glycosylation. Ser95 carries the phosphoserine modification. The segment covering 103 to 119 (DAGPAGPKGEPGSPGEN) has biased composition (low complexity). 4-hydroxyproline occurs at positions 113, 116, 122, 131, 137, 158, 167, 170, 197, 200, 212, 218, 227, 233, 236, and 251. A compositionally biased stretch (low complexity) spans 137–155 (PGASGPAGARGNDGAAGAA). Pro residues predominate over residues 157–169 (PPGPTGPAGPPGF). A compositionally biased stretch (low complexity) spans 203-253 (AGAAGPAGNPGADGQPGAKGANGAPGIAGAPGFPGARGPSGPQGPSGAPGP). A 5-hydroxylysine modification is found at Lys254. 4-hydroxyproline occurs at positions 260, 263, 275, 284, 299, 305, 314, and 320. The segment covering 309 to 318 (GERGGPGSRG) has biased composition (gly residues). Lys329 is modified (5-hydroxylysine). A 4-hydroxyproline mark is found at Pro338, Pro347, Pro353, Pro359, Pro368, Pro371, Pro380, Pro389, Pro395, Pro407, Pro416, Pro425, Pro428, Pro446, Pro468, Pro474, Pro480, Pro486, Pro492, Pro504, Pro513, Pro526, Pro532, and Pro541. Residues 362-388 (KGLTGSPGSPGPDGKTGPPGPAGQDGR) are compositionally biased toward low complexity. Residues 397-416 (ARGQAGVMGFPGPKGAAGEP) are compositionally biased toward low complexity. The segment covering 458-483 (QGPAPGFQGLPGPAGPPGEAGKPGEQ) has biased composition (low complexity). Lys553 carries the post-translational modification 5-hydroxylysine. A 4-hydroxyproline mark is found at Pro559, Pro574, and Pro580. A compositionally biased stretch (low complexity) spans 586 to 600 (SGPSGPAGPTGARGA). Ser589 is modified (phosphoserine). 8 positions are modified to 4-hydroxyproline: Pro601, Pro607, Pro610, Pro619, Pro625, Pro643, Pro652, and Pro661. Low complexity predominate over residues 613–640 (AGFAGPPGADGQPGAKGEPGDAGAKGDA). A compositionally biased stretch (pro residues) spans 642–654 (PPGPAGPTGPPGP). Lys664 bears the 5-hydroxylysine mark. Positions 669–685 (SAGPPGATGFPGAAGRV) are enriched in low complexity. 2 positions are modified to 4-hydroxyproline: Pro673 and Pro679. Pro687 carries the 3-hydroxyproline modification. 4-hydroxyproline is present on residues Pro688, Pro697, Pro700, Pro721, Pro730, Pro738, Pro747, Pro765, Pro774, Pro777, Pro783, Pro798, Pro804, Pro810, Pro819, and Pro825. Positions 714 to 723 (ETGPAGRPGE) are enriched in low complexity. The span at 735 to 747 (KGSPGADGPAGAP) shows a compositional bias: low complexity. Residues 797–807 (PPGPMGPPGLA) are compositionally biased toward pro residues. Residues 809–824 (PPGESGREGSPGAEGS) show a composition bias toward low complexity. A 5-hydroxylysine modification is found at Lys834. The segment covering 843–858 (AGPPGAPGAPGAPGPV) has biased composition (pro residues). Residues Pro846, Pro849, and Pro852 each carry the 4-hydroxyproline modification. Positions 879 to 893 (AGPAGARGPAGPQGP) are enriched in low complexity. Residues 894-905 (RGDKGETGEQGD) show a composition bias toward basic and acidic residues. Lys897 bears the 5-hydroxylysine mark. A 4-hydroxyproline mark is found at Pro918, Pro921, Pro939, and Pro954. A compositionally biased stretch (low complexity) spans 921 to 954 (PGEQGPSGASGPAGPRGPPGSAGSPGKDGLNGLP). Pro959 carries the post-translational modification 3-hydroxyproline. Pro960 is modified (4-hydroxyproline). Residues 972–987 (VGPPGPPGPPGPPGPP) are compositionally biased toward pro residues. Pro974 is subject to 3-hydroxyproline. A 4-hydroxyproline modification is found at Pro975. Pro977 is subject to 3-hydroxyproline. A 4-hydroxyproline modification is found at Pro978. Pro980 bears the 3-hydroxyproline mark. 4-hydroxyproline occurs at positions 981, 984, and 987.

It belongs to the fibrillar collagen family. In terms of assembly, trimers of one alpha 2(I) and two alpha 1(I) chains. Contains mostly 4-hydroxyproline. Proline residues at the third position of the tripeptide repeating unit (G-X-Y) are hydroxylated in some or all of the chains. In terms of processing, contains 3-hydroxyproline at a few sites. This modification occurs on the first proline residue in the sequence motif Gly-Pro-Hyp, where Hyp is 4-hydroxyproline. Post-translationally, lysine residues at the third position of the tripeptide repeating unit (G-X-Y) are 5-hydroxylated in some or all of the chains. O-glycosylated on hydroxylated lysine residues. The O-linked glycan consists of a Glc-Gal disaccharide. In terms of tissue distribution, expressed in bones.

The protein localises to the secreted. It localises to the extracellular space. The protein resides in the extracellular matrix. Its function is as follows. Type I collagen is a member of group I collagen (fibrillar forming collagen). This Glossotherium robustum (Ground sloth) protein is Collagen alpha-1(I) chain.